The chain runs to 191 residues: Orotate phosphoribosyltransferase (191 aa).

Residue 116–124 (EDVVTTGGS) participates in 5-phospho-alpha-D-ribose 1-diphosphate binding. The orotate site is built by Thr120 and Arg148.

This sequence belongs to the purine/pyrimidine phosphoribosyltransferase family. PyrE subfamily. Homodimer. Mg(2+) serves as cofactor.

The enzyme catalyses orotidine 5'-phosphate + diphosphate = orotate + 5-phospho-alpha-D-ribose 1-diphosphate. Its pathway is pyrimidine metabolism; UMP biosynthesis via de novo pathway; UMP from orotate: step 1/2. Its function is as follows. Catalyzes the transfer of a ribosyl phosphate group from 5-phosphoribose 1-diphosphate to orotate, leading to the formation of orotidine monophosphate (OMP). This is Orotate phosphoribosyltransferase from Heliobacterium modesticaldum (strain ATCC 51547 / Ice1).